The chain runs to 158 residues: NAD(P)H-quinone oxidoreductase subunit N (158 aa).

The protein belongs to the complex I NdhN subunit family. NDH-1 can be composed of about 15 different subunits; different subcomplexes with different compositions have been identified which probably have different functions.

It is found in the cellular thylakoid membrane. The catalysed reaction is a plastoquinone + NADH + (n+1) H(+)(in) = a plastoquinol + NAD(+) + n H(+)(out). It catalyses the reaction a plastoquinone + NADPH + (n+1) H(+)(in) = a plastoquinol + NADP(+) + n H(+)(out). Its function is as follows. NDH-1 shuttles electrons from an unknown electron donor, via FMN and iron-sulfur (Fe-S) centers, to quinones in the respiratory and/or the photosynthetic chain. The immediate electron acceptor for the enzyme in this species is believed to be plastoquinone. Couples the redox reaction to proton translocation, and thus conserves the redox energy in a proton gradient. Cyanobacterial NDH-1 also plays a role in inorganic carbon-concentration. The sequence is that of NAD(P)H-quinone oxidoreductase subunit N from Prochlorococcus marinus (strain AS9601).